Reading from the N-terminus, the 563-residue chain is Arginine--tRNA ligase (563 aa).

Positions 120–130 (PNIAKPFHVGH) match the 'HIGH' region motif.

It belongs to the class-I aminoacyl-tRNA synthetase family. Monomer.

The protein localises to the cytoplasm. The enzyme catalyses tRNA(Arg) + L-arginine + ATP = L-arginyl-tRNA(Arg) + AMP + diphosphate. In Clostridium acetobutylicum (strain ATCC 824 / DSM 792 / JCM 1419 / IAM 19013 / LMG 5710 / NBRC 13948 / NRRL B-527 / VKM B-1787 / 2291 / W), this protein is Arginine--tRNA ligase.